The primary structure comprises 444 residues: Endoglucanase N (444 aa).

The signal sequence occupies residues 1–31; the sequence is MWMRRNQIVRKLTLGVVTTVLGMSLSFSALS. Substrate-binding positions include H64, 68–69, Y95, and H130; that span reads WF. Catalysis depends on E168, which acts as the Proton donor. Y230 contacts substrate. E256 functions as the Nucleophile in the catalytic mechanism. Substrate-binding positions include 262–263, W290, and 295–297; these read AS and KSE. Residues 332–358 are disordered; it reads ANLGGGDTPTTPTTPTEPTNPGNGTTG. Positions 339–358 are enriched in low complexity; sequence TPTTPTTPTEPTNPGNGTTG. Residues 356-444 form the CBM3 domain; that stretch reads TTGDVVLQYR…DKANRYVLVT (89 aa).

This sequence belongs to the glycosyl hydrolase 5 (cellulase A) family.

It is found in the secreted. It catalyses the reaction Endohydrolysis of (1-&gt;4)-beta-D-glucosidic linkages in cellulose, lichenin and cereal beta-D-glucans.. The chain is Endoglucanase N (celN) from Pectobacterium atrosepticum (Erwinia carotovora subsp. atroseptica).